The following is a 605-amino-acid chain: Elongation factor 4 (605 aa).

One can recognise a tr-type G domain in the interval 9 to 192 (SRIRNFCIIA…AIIARVPSPA (184 aa)). Residues 21–26 (DHGKST) and 139–142 (NKID) each bind GTP.

Belongs to the TRAFAC class translation factor GTPase superfamily. Classic translation factor GTPase family. LepA subfamily.

The protein localises to the cell inner membrane. The catalysed reaction is GTP + H2O = GDP + phosphate + H(+). Its function is as follows. Required for accurate and efficient protein synthesis under certain stress conditions. May act as a fidelity factor of the translation reaction, by catalyzing a one-codon backward translocation of tRNAs on improperly translocated ribosomes. Back-translocation proceeds from a post-translocation (POST) complex to a pre-translocation (PRE) complex, thus giving elongation factor G a second chance to translocate the tRNAs correctly. Binds to ribosomes in a GTP-dependent manner. This chain is Elongation factor 4, found in Chlorobium phaeovibrioides (strain DSM 265 / 1930) (Prosthecochloris vibrioformis (strain DSM 265)).